The primary structure comprises 421 residues: UDP-N-acetylglucosamine 1-carboxyvinyltransferase (421 aa).

22–23 (KN) is a phosphoenolpyruvate binding site. Arginine 94 serves as a coordination point for UDP-N-acetyl-alpha-D-glucosamine. Residue cysteine 118 is the Proton donor of the active site. Cysteine 118 bears the 2-(S-cysteinyl)pyruvic acid O-phosphothioketal mark. Residues 123–127 (RPMDL), aspartate 308, and isoleucine 330 each bind UDP-N-acetyl-alpha-D-glucosamine.

Belongs to the EPSP synthase family. MurA subfamily.

It is found in the cytoplasm. The catalysed reaction is phosphoenolpyruvate + UDP-N-acetyl-alpha-D-glucosamine = UDP-N-acetyl-3-O-(1-carboxyvinyl)-alpha-D-glucosamine + phosphate. The protein operates within cell wall biogenesis; peptidoglycan biosynthesis. Cell wall formation. Adds enolpyruvyl to UDP-N-acetylglucosamine. The polypeptide is UDP-N-acetylglucosamine 1-carboxyvinyltransferase (Ruegeria pomeroyi (strain ATCC 700808 / DSM 15171 / DSS-3) (Silicibacter pomeroyi)).